The chain runs to 110 residues: ATP synthase epsilon chain (110 aa).

Belongs to the ATPase epsilon chain family. In terms of assembly, F-type ATPases have 2 components, CF(1) - the catalytic core - and CF(0) - the membrane proton channel. CF(1) has five subunits: alpha(3), beta(3), gamma(1), delta(1), epsilon(1). CF(0) has three main subunits: a, b and c.

It is found in the cell inner membrane. Functionally, produces ATP from ADP in the presence of a proton gradient across the membrane. The protein is ATP synthase epsilon chain of Rickettsia typhi (strain ATCC VR-144 / Wilmington).